Consider the following 209-residue polypeptide: Cerebral peptide 1 (209 aa).

The signal sequence occupies residues 1–20; the sequence is MLLAKISVVVLLLAIDGTSS. Residues 21–39 are compositionally biased toward polar residues; the sequence is SESTDNVVLSSSPDSQKAA. Positions 21 to 43 are cleaved as a propeptide — connecting peptide 1; it reads SESTDNVVLSSSPDSQKAATSRH. The tract at residues 21 to 56 is disordered; sequence SESTDNVVLSSSPDSQKAATSRHKRAPGWGKRSSLN. Tryptophan 49 carries the post-translational modification Tryptophan amide. The propeptide at 53 to 77 is connecting peptide 2; the sequence is SSLNDEDLFADSDSAQELLDSVAAL. 2 positions are modified to tryptophan amide: tryptophan 83 and tryptophan 105. The disordered stretch occupies residues 98-169; it reads EAKRAPGWGK…APGWGKRSGG (72 aa). Positions 109-122 are cleaved as a propeptide — connecting peptide 4; it reads GQEIDVDEDGSEQE. Tryptophan 128, tryptophan 135, tryptophan 142, tryptophan 149, tryptophan 156, and tryptophan 163 each carry tryptophan amide. The propeptide at 167–191 is connecting peptide 5; sequence SGGDYCETLEKMVDAYIYKAVEVDS. Cysteine 172 and cysteine 197 form a disulfide bridge.

Homodimer; disulfide-linked. As to expression, cerebral peptide 1 is expressed in the cerebral, pedal and buccal ganglia and B1 and B2 neurons. APGW-amide is expressed in buccal ganglia and several neurons.

The protein localises to the secreted. Its function is as follows. May function as a peptide transmitter. The chain is Cerebral peptide 1 from Aplysia californica (California sea hare).